Consider the following 523-residue polypeptide: Putative UDP-glucuronosyltransferase ugt-50 (523 aa).

Positions 1–25 are cleaved as a signal peptide; the sequence is MHYSQMRWMFFCLTALLHGSFIVNA. Residues Asn84, Asn248, Asn283, and Asn487 are each glycosylated (N-linked (GlcNAc...) asparagine). Residues 490–508 form a helical membrane-spanning segment; sequence IIEHNHLDLFFYLCIISLL.

This sequence belongs to the UDP-glycosyltransferase family.

It is found in the membrane. The enzyme catalyses glucuronate acceptor + UDP-alpha-D-glucuronate = acceptor beta-D-glucuronoside + UDP + H(+). This chain is Putative UDP-glucuronosyltransferase ugt-50 (ugt-50), found in Caenorhabditis elegans.